A 143-amino-acid polypeptide reads, in one-letter code: Hemoglobin subunit alpha (143 aa).

The residue at position 2 (Ser2) is an N-acetylserine. The 142-residue stretch at Ser2–Arg143 folds into the Globin domain. Residue His60 coordinates O2. Position 89 (His89) interacts with heme b.

This sequence belongs to the globin family. As to quaternary structure, heterotetramer of two alpha chains and two beta chains. In terms of tissue distribution, red blood cells.

Its function is as follows. Involved in oxygen transport from gills to the various peripheral tissues. In Danio rerio (Zebrafish), this protein is Hemoglobin subunit alpha (hbaa1).